The sequence spans 285 residues: V-set and transmembrane domain-containing protein 2B (285 aa).

Residues 1-28 (MEQRNRLGALGYLPPLLLHALLLFVADA) form the signal peptide. Positions 29–143 (AFTEVPKDVT…DDDTQEHKAQ (115 aa)) constitute an Ig-like V-type domain. At 29 to 263 (AFTEVPKDVT…HGSGTGRSYT (235 aa)) the chain is on the extracellular side. C49 and C127 are joined by a disulfide. The segment at 161–226 (EAVSHIQSSG…EAAAASAAHT (66 aa)) is disordered. 2 stretches are compositionally biased toward low complexity: residues 177–189 (ASAA…GAAS) and 208–226 (PAAI…AAHT). A helical membrane pass occupies residues 264–284 (TDPLLSLLLLALHKFLRLLLG). Residue H285 is a topological domain, cytoplasmic.

The protein localises to the membrane. The polypeptide is V-set and transmembrane domain-containing protein 2B (VSTM2B) (Homo sapiens (Human)).